Reading from the N-terminus, the 733-residue chain is Cyclic nucleotide-gated channel (733 aa).

2 disordered regions span residues 1–33 (MSTA…PTAS) and 67–95 (PNGN…IEVP). Residues 1–125 (MSTAEPAPDP…PSTDNFYYWT (125 aa)) lie on the Cytoplasmic side of the membrane. The span at 12–25 (NPSTSGLAPTTNGI) shows a compositional bias: polar residues. Residues 126–148 (CVVTVAYIYNLLFVIARQVFNDL) traverse the membrane as a helical segment. Residues 149–197 (IGPSSQSLCRFYNGTLNSTTQVECTYNMLTNMKEMPTYSQYPDLGWSKY) are Extracellular-facing. The helical transmembrane segment at 198 to 217 (WHFRMLWVFFDLLMDCVYLI) threads the bilayer. The Cytoplasmic segment spans residues 218-251 (DTFLNYRMGYMDQGLVVREAEKVTKAYWQSKQYR). A helical transmembrane segment spans residues 252 to 265 (IDGISLIPLDYILG). The Extracellular portion of the chain corresponds to 266 to 276 (WPIPYINWRGL). A helical transmembrane segment spans residues 277 to 287 (PILRLNRLIRY). The Cytoplasmic portion of the chain corresponds to 288–308 (KRVRNCLERTETRSSMPNAFR). Residues 309 to 331 (VVVVVWYIVIIIHWNACLYFWIS) traverse the membrane as a helical segment. Over 332 to 362 (EWIGLGTDAWVYGHLNKQSLPDDITDTLLRR) the chain is Extracellular. The next 2 membrane-spanning stretches (helical) occupy residues 363-385 (YVYS…SPVR) and 386-411 (NIEY…GNVG). The selectivity filter stretch occupies residues 376–379 (TIGE). E379 is a binding site for Na(+). Topologically, residues 412-733 (SMISNMSAAR…TGTESESLLK (322 aa)) are cytoplasmic. The segment at 419 to 496 (AARTEFQNKM…TLRKVRIFQD (78 aa)) is C-linker. The tract at residues 493–607 (IFQDCEAGLL…ALREYPDARK (115 aa)) is cyclic nucleotide-binding domain. G559 provides a ligand contact to 3',5'-cyclic GMP. E560 is a 3',5'-cyclic AMP binding site. 3',5'-cyclic GMP-binding residues include S562, R575, T576, K619, and D620. 3',5'-cyclic AMP is bound at residue R575. The tract at residues 694–733 (SIDGGDISTDGVDERVRPPRLRQTKTIDLPTGTESESLLK) is disordered.

Belongs to the cyclic nucleotide-gated cation channel (TC 1.A.1.5) family. As to quaternary structure, homotetramer. As to expression, expressed at the sensory endings of thermosensory, gustatory, and olfactory neurons.

It localises to the cell membrane. The protein localises to the cell projection. The protein resides in the cilium. The catalysed reaction is Ca(2+)(in) = Ca(2+)(out). The enzyme catalyses Na(+)(in) = Na(+)(out). It catalyses the reaction K(+)(in) = K(+)(out). Functionally, pore-forming subunit of the cyclic nucleotide-gated channel. Required for normal thermosensation and chemosensation sensory behavior. Required, downstream of receptor-type guanylate cyclase gcy-9, for CO2-mediated responses in BAG neurons. Required, downstream of receptor-type guanylate cyclase gcy-14, for alkaline pH-mediated responses in ASE-left (ASEL) neurons. Involved in the development of ASJ sensory neuron axon during late larval stages and in the maintenance of normal axon morphology in the adult. Regulates dauer formation. Required for the calcium flux to the cytoplasm in the ASJ sensory neurons upon the onset and removal of a nitric oxide (NO) stimulus, thereby promoting the ASJ-mediated behavioral avoidance response to NO-producing organisms like P.aeruginosa. In ASI and ASJ sensory neurons, controls behavioral response to P.aeruginosa by up-regulating the transcription of daf-7, a member of the TGF-beta family. In AWB and AWC sensory neurons, mediates the recognition of food odors which subsequently allows for the detection of preferred food sources. In AWC neurons, acts to promote expression of srsx-3, a member of the GPCR family. Binding to cGMP results in conformational changes at the hydrophobic gate that converts the protein from an inactive closed state to an active open state. In Caenorhabditis elegans, this protein is Cyclic nucleotide-gated channel (tax-4).